The following is a 503-amino-acid chain: Cytochrome P450 3A29 (503 aa).

Residue Cys442 coordinates heme.

It belongs to the cytochrome P450 family. Requires heme as cofactor.

It localises to the endoplasmic reticulum membrane. The protein resides in the microsome membrane. The enzyme catalyses an organic molecule + reduced [NADPH--hemoprotein reductase] + O2 = an alcohol + oxidized [NADPH--hemoprotein reductase] + H2O + H(+). Functionally, cytochromes P450 are a group of heme-thiolate monooxygenases. In liver microsomes, this enzyme is involved in an NADPH-dependent electron transport pathway. It oxidizes a variety of structurally unrelated compounds, including steroids, fatty acids, and xenobiotics. The chain is Cytochrome P450 3A29 (CYP3A29) from Sus scrofa (Pig).